The chain runs to 161 residues: uncharacterized protein (161 aa).

An N-terminal signal peptide occupies residues 1 to 27 (MKKIGLLFMLCLAALFTIGFPAQQADA).

It localises to the secreted. This is an uncharacterized protein from Bacillus subtilis (strain 168).